Consider the following 295-residue polypeptide: Tissue factor (295 aa).

A signal peptide spans 1-28 (MAIPMRPRLLAALAPTFLGFLLLQVAVG). At 29-252 (AGTPPGKAFN…TEQWKSVLGE (224 aa)) the chain is on the extracellular side. N-linked (GlcNAc...) asparagine glycans are attached at residues Asn-38 and Asn-58. Cys-76 and Cys-84 are oxidised to a cystine. Residues Asn-95, Asn-109, Asn-170, and Asn-201 are each glycosylated (N-linked (GlcNAc...) asparagine). Cys-219 and Cys-242 are disulfide-bonded. Residues 246–248 (WKS) carry the WKS motif motif. Residues 253–275 (TLIIVGAVVFLVTVFIILLTISL) form a helical membrane-spanning segment. The S-palmitoyl cysteine moiety is linked to residue Cys-276. The Cytoplasmic segment spans residues 276 to 295 (CKRRKNRAGQKRKNTPSRLA).

Belongs to the tissue factor family. In terms of assembly, interacts with HSPE; the interaction, inhibited by heparin, promotes the generation of activated factor X and activates coagulation in the presence of activated factor VII.

The protein localises to the membrane. Initiates blood coagulation by forming a complex with circulating factor VII or VIIa. The [TF:VIIa] complex activates factors IX or X by specific limited proteolysis. TF plays a role in normal hemostasis by initiating the cell-surface assembly and propagation of the coagulation protease cascade. This is Tissue factor (F3) from Rattus norvegicus (Rat).